The primary structure comprises 217 residues: ATP-dependent Clp protease proteolytic subunit (217 aa).

Residue S121 is the Nucleophile of the active site. H146 is a catalytic residue.

It belongs to the peptidase S14 family. As to quaternary structure, fourteen ClpP subunits assemble into 2 heptameric rings which stack back to back to give a disk-like structure with a central cavity, resembling the structure of eukaryotic proteasomes.

It is found in the cytoplasm. The enzyme catalyses Hydrolysis of proteins to small peptides in the presence of ATP and magnesium. alpha-casein is the usual test substrate. In the absence of ATP, only oligopeptides shorter than five residues are hydrolyzed (such as succinyl-Leu-Tyr-|-NHMec, and Leu-Tyr-Leu-|-Tyr-Trp, in which cleavage of the -Tyr-|-Leu- and -Tyr-|-Trp bonds also occurs).. In terms of biological role, cleaves peptides in various proteins in a process that requires ATP hydrolysis. Has a chymotrypsin-like activity. Plays a major role in the degradation of misfolded proteins. The protein is ATP-dependent Clp protease proteolytic subunit of Burkholderia mallei (strain NCTC 10247).